Reading from the N-terminus, the 400-residue chain is MASLALTSPPSVKIPSYLSSSSSSLFSRSSISFRTTESRSRICVSGYAKCNLPKALNGNARVPIINETTIPKFFDSSRLEKSVSRNNTKLKLFSGTANPALSQEIAWYMGLELGKVSIKRFADGEIYVQLKESVRGCDVFLVQPTCTPTNENLMELLIMVDACRRASAKKVTAVIPYFGYARADRKTQGRESIAAKLVANLITEAGADRVLACDLHSGQSMGYFDIPVDHVYCQPVILDYLASKSISSEDLVVVSPDVGGVARARAFAKKLSDAPLAIVDKRRHGHNVAEVMNLIGDVKGKVAVMVDDIIDTAGTIVKGAALLHEEGAREVYACCTHAVFSPPAIERLSSGLLQEVIVTNTLPVAEKNYFPQLTILSVANLLGETIWRVHDDSSVSSIFL.

Residues 1-44 (MASLALTSPPSVKIPSYLSSSSSSLFSRSSISFRTTESRSRICV) constitute a chloroplast transit peptide. Mg(2+)-binding residues include Asp214, His216, Asp225, and Asp229. A binding of phosphoribosylpyrophosphate region spans residues 300–315 (GKVAVMVDDIIDTAGT).

Belongs to the ribose-phosphate pyrophosphokinase family.

It localises to the plastid. Its subcellular location is the chloroplast. It catalyses the reaction D-ribose 5-phosphate + ATP = 5-phospho-alpha-D-ribose 1-diphosphate + AMP + H(+). The polypeptide is Ribose-phosphate pyrophosphokinase 2, chloroplastic (PRS2) (Arabidopsis thaliana (Mouse-ear cress)).